We begin with the raw amino-acid sequence, 591 residues long: Nuclear receptor subfamily 4 group A member 2 (591 aa).

Disordered regions lie at residues 1–22 (MPCV…SQSY) and 110–133 (SEEM…SSTP). Low complexity predominate over residues 8-22 (YGSSPQGASPASQSY). A DNA-binding region (nuclear receptor) is located at residues 253 to 328 (EGLCAVCGDN…VGMVKEVVRT (76 aa)). 2 NR C4-type zinc fingers span residues 256–276 (CAVC…CEGC) and 292–311 (CLAN…CQYC). The Bipartite nuclear localization signal (NLS1) signature appears at 280–307 (FKRTVQKNAKYVCLANKNCPVDKRRRNR). The segment at 330–354 (SLKGRRGRLPSKPKSPQEPSPPSPP) is disordered. The Nuclear localization signal (NLS1) motif lies at 331 to 343 (LKGRRGRLPSKPK). Pro residues predominate over residues 345 to 354 (PQEPSPPSPP). An NR LBD domain is found at 353 to 588 (PPVSLISALV…AIIDKLFLDT (236 aa)). The nuclear export sequence (NES1) signature appears at 436 to 445 (FLELFVLRLA). Positions 561-570 (QGLQRIFYLK) match the nuclear export sequence (NES2) motif.

This sequence belongs to the nuclear hormone receptor family.

The protein resides in the cytoplasm. It is found in the nucleus. In terms of biological role, transcriptional regulator which may play a role in the differentiation and maintenance of meso-diencephalic dopaminergic (mdDA) neurons. The chain is Nuclear receptor subfamily 4 group A member 2 (nr4a2) from Xenopus tropicalis (Western clawed frog).